The primary structure comprises 607 residues: Type 3 secretion system secretin (607 aa).

The N-terminal stretch at 1–33 (MAPACTTAHRRRAPLAAVLMLSLLPLLSPHADA) is a signal peptide. Positions 277–332 (ASSSDRVPVSPPLPGSGAAAAAGSPASVWPELSKGRRDESNPIDAGGGAELASDAP) are disordered. The span at 291–306 (GSGAAAAAGSPASVWP) shows a compositional bias: low complexity.

It belongs to the bacterial secretin family. T3SS SctC subfamily. As to quaternary structure, the core secretion machinery of the T3SS is composed of approximately 20 different proteins, including cytoplasmic components, a base, an export apparatus and a needle. This subunit is part of the base, which anchors the injectisome in the bacterial cell envelope. Forms a stable homooligomeric complex.

The protein localises to the cell outer membrane. Functionally, component of the type III secretion system (T3SS), also called injectisome, which is used to inject bacterial effector proteins into eukaryotic host cells. Forms a ring-shaped multimeric structure with an apparent central pore in the outer membrane. Necessary for both basic pathogenicity and the induction of the hypersensitive response in resistant plants. This chain is Type 3 secretion system secretin, found in Xanthomonas euvesicatoria.